We begin with the raw amino-acid sequence, 209 residues long: GTP cyclohydrolase-2 (209 aa).

49–53 (RIHSE) contacts GTP. Residues Cys54, Cys65, and Cys67 each contribute to the Zn(2+) site. Residues Gln70, 92-94 (EGR), and Thr114 each bind GTP. Asp126 acts as the Proton acceptor in catalysis. Arg128 functions as the Nucleophile in the catalytic mechanism. Positions 149 and 154 each coordinate GTP.

The protein belongs to the GTP cyclohydrolase II family. Zn(2+) is required as a cofactor.

It catalyses the reaction GTP + 4 H2O = 2,5-diamino-6-hydroxy-4-(5-phosphoribosylamino)-pyrimidine + formate + 2 phosphate + 3 H(+). The protein operates within cofactor biosynthesis; riboflavin biosynthesis; 5-amino-6-(D-ribitylamino)uracil from GTP: step 1/4. Functionally, catalyzes the conversion of GTP to 2,5-diamino-6-ribosylamino-4(3H)-pyrimidinone 5'-phosphate (DARP), formate and pyrophosphate. This Shewanella pealeana (strain ATCC 700345 / ANG-SQ1) protein is GTP cyclohydrolase-2.